Consider the following 362-residue polypeptide: Phosphate acyltransferase (362 aa).

Residues 343–362 (TKKISTSTINPKTSETTKES) form a disordered region. The segment covering 344–356 (KKISTSTINPKTS) has biased composition (polar residues).

Belongs to the PlsX family. Homodimer. Probably interacts with PlsY.

The protein localises to the cytoplasm. It carries out the reaction a fatty acyl-[ACP] + phosphate = an acyl phosphate + holo-[ACP]. Its pathway is lipid metabolism; phospholipid metabolism. Catalyzes the reversible formation of acyl-phosphate (acyl-PO(4)) from acyl-[acyl-carrier-protein] (acyl-ACP). This enzyme utilizes acyl-ACP as fatty acyl donor, but not acyl-CoA. This is Phosphate acyltransferase from Aster yellows witches'-broom phytoplasma (strain AYWB).